Reading from the N-terminus, the 169-residue chain is Styrene-oxide isomerase (169 aa).

Transmembrane regions (helical) follow at residues 13 to 33 (GILMIFCTLLFGVGLWMHLVG), 61 to 81 (PALNGMMVIAVAFVLPSLGFA), 85 to 105 (PHLLGNIIILDGWANVGFYFF), and 129 to 149 (FLALAPAYLFGVLAMGALAVI).

It is found in the membrane. The enzyme catalyses styrene oxide = 2-phenylacetaldehyde. The protein operates within aromatic compound metabolism. Its function is as follows. Epoxystyrene isomerase that catalyzes the second step in the aerobic styrene degradation pathway by converting epoxystyrene to phenylacetaldehyde. The polypeptide is Styrene-oxide isomerase (styC) (Pseudomonas fluorescens).